A 204-amino-acid chain; its full sequence is Ribonuclease HII (204 aa).

Residues 14–204 (QYICGVDEVG…SFKLSCLGEK (191 aa)) enclose the RNase H type-2 domain. Residues aspartate 20, glutamate 21, and aspartate 116 each coordinate a divalent metal cation.

The protein belongs to the RNase HII family. The cofactor is Mn(2+). Mg(2+) is required as a cofactor.

It localises to the cytoplasm. It carries out the reaction Endonucleolytic cleavage to 5'-phosphomonoester.. Endonuclease that specifically degrades the RNA of RNA-DNA hybrids. The sequence is that of Ribonuclease HII from Chloroherpeton thalassium (strain ATCC 35110 / GB-78).